We begin with the raw amino-acid sequence, 879 residues long: DNA replication licensing factor mcm3 (879 aa).

The region spanning 306–513 (VFELLSTSLA…KDRALSEHVL (208 aa)) is the MCM domain. Position 356-363 (356-363 (GDPSTAKS)) interacts with ATP. Residues 488–491 (SRFD) carry the Arginine finger motif. Positions 679 to 778 (RKKHKKQRLE…STLPATSREL (100 aa)) are disordered. Acidic residues predominate over residues 690–713 (GEEFDSEDDNSDDMDIEESEEEMD). Residues 732–752 (TSQSQESGSEIGSSIAGTAGS) are compositionally biased toward low complexity. The span at 754–778 (NVGTSNTQLSWPSTHSTLPATSREL) shows a compositional bias: polar residues.

The protein belongs to the MCM family. As to quaternary structure, component of the mcm2-7 complex. The complex forms a toroidal hexameric ring with the proposed subunit order mcm2-mcm6-mcm4-mcm7-mcm3-mcm5. The heterodimers of mcm4/mcm6 and mcm3/mcm5 interact with mcm2 and mcm7.

The protein resides in the nucleus. The catalysed reaction is ATP + H2O = ADP + phosphate + H(+). Acts as a component of the mcm2-7 complex (mcm complex) which is the putative replicative helicase essential for 'once per cell cycle' DNA replication initiation and elongation in eukaryotic cells. The active ATPase sites in the mcm2-7 ring are formed through the interaction surfaces of two neighboring subunits such that a critical structure of a conserved arginine finger motif is provided in trans relative to the ATP-binding site of the Walker A box of the adjacent subunit. The six ATPase active sites, however, are likely to contribute differentially to the complex helicase activity. In Schizosaccharomyces pombe (strain 972 / ATCC 24843) (Fission yeast), this protein is DNA replication licensing factor mcm3 (mcm3).